Consider the following 43-residue polypeptide: Metallothionein-2 (43 aa).

Blocked amino end (Met) is present on methionine 1.

Belongs to the metallothionein superfamily. Type 5 family.

In terms of biological role, this protein binds cations of several transition elements. Thought to be involved in metal ion homeostasis. This is Metallothionein-2 (MtnB) from Drosophila melanogaster (Fruit fly).